Here is a 1087-residue protein sequence, read N- to C-terminus: 2'-5'-oligoadenylate synthase 3 (1087 aa).

Met-1 bears the N-acetylmethionine mark. The OAS domain 1 stretch occupies residues 6-343 (TPAAALDRFV…GDPVQSWKGP (338 aa)). 2 interaction with dsRNA regions span residues 12–57 (DRFV…VLKT) and 186–200 (ELRR…AKLK). A linker region spans residues 344-410 (GLPRAGCSGL…VPGMALDLSQ (67 aa)). Position 365 is a phosphothreonine (Thr-365). 2 OAS domain regions span residues 411-742 (IPTK…PWDV) and 750-1084 (TPAG…WPVK). Ser-804 is an ATP binding site. Mg(2+)-binding residues include Asp-816, Asp-818, and Asp-888. Positions 947, 950, and 969 each coordinate ATP.

The protein belongs to the 2-5A synthase family. In terms of assembly, monomer. Requires Mg(2+) as cofactor. Present at high level in placenta trophoblast.

The protein localises to the cytoplasm. Its subcellular location is the nucleus. It catalyses the reaction 3 ATP = 5'-triphosphoadenylyl-(2'-&gt;5')-adenylyl-(2'-&gt;5')-adenosine + 2 diphosphate. Its activity is regulated as follows. Produced as a latent enzyme which is activated by dsRNA generated during the course of viral infection. Strongly activated by long dsRNAs at least 50 nucleotides in length. ssRNA does not activate the enzyme. In terms of biological role, interferon-induced, dsRNA-activated antiviral enzyme which plays a critical role in cellular innate antiviral response. In addition, it may also play a role in other cellular processes such as apoptosis, cell growth, differentiation and gene regulation. Synthesizes preferentially dimers of 2'-5'-oligoadenylates (2-5A) from ATP which then bind to the inactive monomeric form of ribonuclease L (RNase L) leading to its dimerization and subsequent activation. Activation of RNase L leads to degradation of cellular as well as viral RNA, resulting in the inhibition of protein synthesis, thus terminating viral replication. Can mediate the antiviral effect via the classical RNase L-dependent pathway or an alternative antiviral pathway independent of RNase L. Displays antiviral activity against Chikungunya virus (CHIKV), Dengue virus, Sindbis virus (SINV) and Semliki forest virus (SFV). The chain is 2'-5'-oligoadenylate synthase 3 (OAS3) from Homo sapiens (Human).